Here is a 605-residue protein sequence, read N- to C-terminus: IQ domain-containing protein IQM2 (605 aa).

Residues 105–134 form the IQ domain; it reads KHEAAIKLQKVYKSFRTRRKLADCAVLVEQ. The interval 408–505 is disordered; it reads QDKVDPSGEE…EEGETKESEV (98 aa). Over residues 425 to 440 the composition is skewed to basic and acidic residues; the sequence is SISRKQSDLETPEKME. A compositionally biased stretch (acidic residues) spans 462–480; sequence DYDSGDDEEEEEEMFELEQ. Low complexity predominate over residues 481–490; the sequence is ESMPSEQSSP. Residues 491 to 505 are compositionally biased toward basic and acidic residues; sequence RGEEKEEGETKESEV.

As to expression, expressed in rosette and cauline leaves, stems, flowers and siliques, and at lower levels in roots.

The protein resides in the cytoplasm. It is found in the nucleus. Functionally, may be involved in biotic and abiotic stress responses. This Arabidopsis thaliana (Mouse-ear cress) protein is IQ domain-containing protein IQM2.